Consider the following 375-residue polypeptide: Superinfection exclusion protein (375 aa).

Positions 1 to 15 (MIALLILSLACSVSA) are cleaved as a signal peptide.

This sequence belongs to the serpin family. Orthopoxvirus OPG040 subfamily. Interacts with OPG185/A56 protein.

Its subcellular location is the virion membrane. It is found in the host cell membrane. In terms of biological role, negatively regulates superinfection and syncytium formation in infected host cells. Acts in concert with OPG185/A56 protein at the host cell membrane by interacting with and inhibiting the mature virion entry/fusion complex (EFC). This mechanism ensures that new virions released from the cell cannot enter already infected cells. In Cynomys gunnisoni (Gunnison's prairie dog), this protein is Superinfection exclusion protein (OPG040).